Consider the following 269-residue polypeptide: Subtilisin Savinase (269 aa).

Position 2 (Gln-2) interacts with Ca(2+). The region spanning 5-268 (PWGISRVQAP…SGLVNAEAAT (264 aa)) is the Peptidase S8 domain. The active-site Charge relay system is the Asp-32. A Ca(2+)-binding site is contributed by Asp-40. His-62 acts as the Charge relay system in catalysis. Residues Leu-73, Asn-75, Ile-77, Val-79, Ala-163, Tyr-165, and Ala-168 each contribute to the Ca(2+) site. The active-site Charge relay system is the Ser-215.

This sequence belongs to the peptidase S8 family. Ca(2+) serves as cofactor.

Its subcellular location is the secreted. It catalyses the reaction Hydrolysis of proteins with broad specificity for peptide bonds, and a preference for a large uncharged residue in P1. Hydrolyzes peptide amides.. Its function is as follows. Subtilisin is an extracellular alkaline serine protease, it catalyzes the hydrolysis of proteins and peptide amides. The polypeptide is Subtilisin Savinase (Lederbergia lenta (Bacillus lentus)).